The sequence spans 314 residues: 2,3-dihydroxyphenylpropionate/2,3-dihydroxicinnamic acid 1,2-dioxygenase 1 (314 aa).

The Proton donor role is filled by His115. Residue His179 is the Proton acceptor of the active site.

The protein belongs to the LigB/MhpB extradiol dioxygenase family. In terms of assembly, homotetramer. It depends on Fe(2+) as a cofactor.

It catalyses the reaction 3-(2,3-dihydroxyphenyl)propanoate + O2 = (2Z,4E)-2-hydroxy-6-oxonona-2,4-dienedioate + H(+). It carries out the reaction (2E)-3-(2,3-dihydroxyphenyl)prop-2-enoate + O2 = (2Z,4E,7E)-2-hydroxy-6-oxonona-2,4,7-trienedioate + H(+). It participates in aromatic compound metabolism; 3-phenylpropanoate degradation. Catalyzes the non-heme iron(II)-dependent oxidative cleavage of 2,3-dihydroxyphenylpropionic acid and 2,3-dihydroxicinnamic acid into 2-hydroxy-6-ketononadienedioate and 2-hydroxy-6-ketononatrienedioate, respectively. This chain is 2,3-dihydroxyphenylpropionate/2,3-dihydroxicinnamic acid 1,2-dioxygenase 1, found in Pseudomonas putida (Arthrobacter siderocapsulatus).